The sequence spans 363 residues: 3-isopropylmalate dehydrogenase (363 aa).

Residue 78-91 coordinates NAD(+); that stretch reads GPKWEHLPPDQQPE. Arg99, Arg109, Arg138, and Asp227 together coordinate substrate. Residues Asp227, Asp251, and Asp255 each coordinate Mg(2+). 285–297 provides a ligand contact to NAD(+); that stretch reads GSAPDIAGKNIAN.

This sequence belongs to the isocitrate and isopropylmalate dehydrogenases family. LeuB type 1 subfamily. In terms of assembly, homodimer. The cofactor is Mg(2+). It depends on Mn(2+) as a cofactor.

The protein resides in the cytoplasm. The enzyme catalyses (2R,3S)-3-isopropylmalate + NAD(+) = 4-methyl-2-oxopentanoate + CO2 + NADH. It functions in the pathway amino-acid biosynthesis; L-leucine biosynthesis; L-leucine from 3-methyl-2-oxobutanoate: step 3/4. Its function is as follows. Catalyzes the oxidation of 3-carboxy-2-hydroxy-4-methylpentanoate (3-isopropylmalate) to 3-carboxy-4-methyl-2-oxopentanoate. The product decarboxylates to 4-methyl-2 oxopentanoate. The chain is 3-isopropylmalate dehydrogenase from Escherichia coli O157:H7.